Consider the following 88-residue polypeptide: Small ribosomal subunit protein bS20 (88 aa).

The protein belongs to the bacterial ribosomal protein bS20 family.

Its function is as follows. Binds directly to 16S ribosomal RNA. The protein is Small ribosomal subunit protein bS20 of Natranaerobius thermophilus (strain ATCC BAA-1301 / DSM 18059 / JW/NM-WN-LF).